The primary structure comprises 284 residues: Bifunctional protein FolD (284 aa).

NADP(+) contacts are provided by residues 165–167 (GAS), Ser-190, and Ile-231.

It belongs to the tetrahydrofolate dehydrogenase/cyclohydrolase family. As to quaternary structure, homodimer.

The enzyme catalyses (6R)-5,10-methylene-5,6,7,8-tetrahydrofolate + NADP(+) = (6R)-5,10-methenyltetrahydrofolate + NADPH. The catalysed reaction is (6R)-5,10-methenyltetrahydrofolate + H2O = (6R)-10-formyltetrahydrofolate + H(+). Its pathway is one-carbon metabolism; tetrahydrofolate interconversion. Catalyzes the oxidation of 5,10-methylenetetrahydrofolate to 5,10-methenyltetrahydrofolate and then the hydrolysis of 5,10-methenyltetrahydrofolate to 10-formyltetrahydrofolate. This is Bifunctional protein FolD from Polynucleobacter asymbioticus (strain DSM 18221 / CIP 109841 / QLW-P1DMWA-1) (Polynucleobacter necessarius subsp. asymbioticus).